Here is a 297-residue protein sequence, read N- to C-terminus: MISPAKINLGLEIPFKRLDGFHEIRSVFLKISWGDDIEIEPASNGVFELFSNNEIILEKRKLYDQVSERGDIKNNILYKTFIKARSLFPELPGVKIHLTKRISPAGGLGGGSTNAASLLNFLFSWCPFFTSDEMFVLAAEIGSDVPFFLGEGHAFVTGKGEILEEIEVHHGQGILALTPQVMNTSEMYSLLKKPLQESASQKNGNTLSKNLISILKNGDWSSLQGRLWNDFEPVAFQLHPELGVLKDKFLEFGSSYCSLTGSGSSMYGLVQGLEIQEELLQRLRQEFSNLTFVRFNF.

Catalysis depends on residues K6 and D144.

This sequence belongs to the GHMP kinase family. IspE subfamily.

It carries out the reaction 4-CDP-2-C-methyl-D-erythritol + ATP = 4-CDP-2-C-methyl-D-erythritol 2-phosphate + ADP + H(+). Its pathway is isoprenoid biosynthesis; isopentenyl diphosphate biosynthesis via DXP pathway; isopentenyl diphosphate from 1-deoxy-D-xylulose 5-phosphate: step 3/6. Catalyzes the phosphorylation of the position 2 hydroxy group of 4-diphosphocytidyl-2C-methyl-D-erythritol. The sequence is that of 4-diphosphocytidyl-2-C-methyl-D-erythritol kinase from Leptospira interrogans serogroup Icterohaemorrhagiae serovar copenhageni (strain Fiocruz L1-130).